The primary structure comprises 172 residues: Large ribosomal subunit protein eL20 (172 aa).

The protein belongs to the eukaryotic ribosomal protein eL20 family. Component of the large ribosomal subunit. Mature ribosomes consist of a small (40S) and a large (60S) subunit. The 40S subunit contains about 32 different proteins and 1 molecule of RNA (18S). The 60S subunit contains 45 different proteins and 3 molecules of RNA (25S, 5.8S and 5S).

It localises to the cytoplasm. Component of the ribosome, a large ribonucleoprotein complex responsible for the synthesis of proteins in the cell. The small ribosomal subunit (SSU) binds messenger RNAs (mRNAs) and translates the encoded message by selecting cognate aminoacyl-transfer RNA (tRNA) molecules. The large subunit (LSU) contains the ribosomal catalytic site termed the peptidyl transferase center (PTC), which catalyzes the formation of peptide bonds, thereby polymerizing the amino acids delivered by tRNAs into a polypeptide chain. The nascent polypeptides leave the ribosome through a tunnel in the LSU and interact with protein factors that function in enzymatic processing, targeting, and the membrane insertion of nascent chains at the exit of the ribosomal tunnel. The chain is Large ribosomal subunit protein eL20 from Candida albicans (strain SC5314 / ATCC MYA-2876) (Yeast).